A 263-amino-acid chain; its full sequence is Sulfur carrier protein FdhD (263 aa).

The active-site Cysteine persulfide intermediate is the Cys107.

It belongs to the FdhD family.

The protein resides in the cytoplasm. Functionally, required for formate dehydrogenase (FDH) activity. Acts as a sulfur carrier protein that transfers sulfur from IscS to the molybdenum cofactor prior to its insertion into FDH. The sequence is that of Sulfur carrier protein FdhD from Bacillus licheniformis (strain ATCC 14580 / DSM 13 / JCM 2505 / CCUG 7422 / NBRC 12200 / NCIMB 9375 / NCTC 10341 / NRRL NRS-1264 / Gibson 46).